Reading from the N-terminus, the 353-residue chain is Outer membrane protein P2 (353 aa).

The first 20 residues, 1–20 (MKKTLAALIVGAFAASAANA), serve as a signal peptide directing secretion.

The protein belongs to the Gram-negative porin family. In terms of assembly, homotrimer.

The protein localises to the cell outer membrane. Functionally, forms pores that allow passive diffusion of small molecules across the outer membrane. This chain is Outer membrane protein P2 (ompP2), found in Haemophilus influenzae.